Consider the following 153-residue polypeptide: Small ribosomal subunit protein bS6 (153 aa).

A disordered region spans residues 94–153; the sequence is EAHEEGPSAMMQKRDRDDRPRRDGDRPDRGPREDRGPRPPREGGFGDREDRPRRPREDRA.

Belongs to the bacterial ribosomal protein bS6 family.

Binds together with bS18 to 16S ribosomal RNA. The protein is Small ribosomal subunit protein bS6 of Agrobacterium fabrum (strain C58 / ATCC 33970) (Agrobacterium tumefaciens (strain C58)).